Reading from the N-terminus, the 59-residue chain is UPF0434 protein HEAR2489 (59 aa).

Belongs to the UPF0434 family.

The chain is UPF0434 protein HEAR2489 from Herminiimonas arsenicoxydans.